Here is a 134-residue protein sequence, read N- to C-terminus: Large ribosomal subunit protein uL14 (134 aa).

This sequence belongs to the universal ribosomal protein uL14 family. As to quaternary structure, part of the 50S ribosomal subunit. Forms a cluster with proteins L3 and L19. In the 70S ribosome, L14 and L19 interact and together make contacts with the 16S rRNA in bridges B5 and B8.

Functionally, binds to 23S rRNA. Forms part of two intersubunit bridges in the 70S ribosome. This chain is Large ribosomal subunit protein uL14, found in Deinococcus deserti (strain DSM 17065 / CIP 109153 / LMG 22923 / VCD115).